The primary structure comprises 537 residues: Apoptosis inhibitor 5-like protein API5 (537 aa).

The tract at residues 9–363 is ARM-like and Heat-like helical repeats; sequence AEVERLYELG…TTNSLCGYKI (355 aa). The disordered stretch occupies residues 465-537; sequence WMEQPKKPAP…GGRGRGWGYR (73 aa). A compositionally biased stretch (polar residues) spans 474 to 492; it reads PTTTGGKRSQPATNGNTPA.

It belongs to the API5 family. As to quaternary structure, interacts with AIP1 and AIP2.

It is found in the nucleus. Putative anti-apoptotic factor involved in the regulation of tapetal programmed cell death (PCD) and degeneration during anther development. Interacts directly with the DEAD-box ATP-dependent RNA helicases AIP1 and AIP2 that form dimers and bind the promoter region of the cysteine protease CP1 involved in tapetum PCD. The sequence is that of Apoptosis inhibitor 5-like protein API5 from Oryza sativa subsp. japonica (Rice).